The primary structure comprises 656 residues: ATP-dependent zinc metalloprotease FtsH (656 aa).

At Met-1 to Thr-45 the chain is on the cytoplasmic side. A helical membrane pass occupies residues Gly-46–Ala-66. Over Gln-67 to Ala-147 the chain is Lumenal. A helical transmembrane segment spans residues Val-148 to Leu-168. The Cytoplasmic portion of the chain corresponds to Arg-169–Gln-656. Residue Gly-239–Thr-246 participates in ATP binding. His-460 serves as a coordination point for Zn(2+). Residue Glu-461 is part of the active site. The Zn(2+) site is built by His-464 and Asp-538.

In the central section; belongs to the AAA ATPase family. The protein in the C-terminal section; belongs to the peptidase M41 family. As to quaternary structure, homohexamer. Requires Zn(2+) as cofactor.

The protein localises to the cellular thylakoid membrane. In terms of biological role, acts as a processive, ATP-dependent zinc metallopeptidase for both cytoplasmic and membrane proteins. Plays a role in the quality control of integral membrane proteins. This is ATP-dependent zinc metalloprotease FtsH from Nostoc sp. (strain PCC 7120 / SAG 25.82 / UTEX 2576).